The following is a 374-amino-acid chain: Dihydroorotate dehydrogenase (quinone) (374 aa).

FMN contacts are provided by residues 78–82 and Thr102; that span reads AGFDK. A substrate-binding site is contributed by Lys82. Residue 127–131 coordinates substrate; it reads NRMGF. 2 residues coordinate FMN: Asn159 and Asn192. Asn192 serves as a coordination point for substrate. Ser195 acts as the Nucleophile in catalysis. Asn197 contacts substrate. The FMN site is built by Lys230 and Thr258. 259-260 lines the substrate pocket; sequence NT. FMN is bound by residues Gly287, Gly316, and 337 to 338; that span reads YT.

This sequence belongs to the dihydroorotate dehydrogenase family. Type 2 subfamily. As to quaternary structure, monomer. FMN is required as a cofactor.

It is found in the cell membrane. It catalyses the reaction (S)-dihydroorotate + a quinone = orotate + a quinol. Its pathway is pyrimidine metabolism; UMP biosynthesis via de novo pathway; orotate from (S)-dihydroorotate (quinone route): step 1/1. Catalyzes the conversion of dihydroorotate to orotate with quinone as electron acceptor. The chain is Dihydroorotate dehydrogenase (quinone) from Acaryochloris marina (strain MBIC 11017).